Reading from the N-terminus, the 211-residue chain is N-(5'-phosphoribosyl)anthranilate isomerase (211 aa).

Belongs to the TrpF family.

It catalyses the reaction N-(5-phospho-beta-D-ribosyl)anthranilate = 1-(2-carboxyphenylamino)-1-deoxy-D-ribulose 5-phosphate. It functions in the pathway amino-acid biosynthesis; L-tryptophan biosynthesis; L-tryptophan from chorismate: step 3/5. This is N-(5'-phosphoribosyl)anthranilate isomerase from Zymomonas mobilis subsp. mobilis (strain ATCC 31821 / ZM4 / CP4).